The chain runs to 461 residues: Cysteine--tRNA ligase (461 aa).

Residue Cys28 coordinates Zn(2+). The 'HIGH' region motif lies at 30–40 (ITVYDLCHIGH). Cys209, His234, and Glu238 together coordinate Zn(2+). Positions 266–270 (KMSKS) match the 'KMSKS' region motif. Position 269 (Lys269) interacts with ATP.

The protein belongs to the class-I aminoacyl-tRNA synthetase family. Monomer. Requires Zn(2+) as cofactor.

The protein localises to the cytoplasm. It carries out the reaction tRNA(Cys) + L-cysteine + ATP = L-cysteinyl-tRNA(Cys) + AMP + diphosphate. In Cronobacter sakazakii (strain ATCC BAA-894) (Enterobacter sakazakii), this protein is Cysteine--tRNA ligase.